We begin with the raw amino-acid sequence, 174 residues long: Shikimate kinase (174 aa).

15 to 20 (GTGKST) lines the ATP pocket. S19 is a binding site for Mg(2+). 3 residues coordinate substrate: D37, R61, and G82. An ATP-binding site is contributed by R120. Residue R138 participates in substrate binding.

It belongs to the shikimate kinase family. In terms of assembly, monomer. It depends on Mg(2+) as a cofactor.

It is found in the cytoplasm. It catalyses the reaction shikimate + ATP = 3-phosphoshikimate + ADP + H(+). The protein operates within metabolic intermediate biosynthesis; chorismate biosynthesis; chorismate from D-erythrose 4-phosphate and phosphoenolpyruvate: step 5/7. In terms of biological role, catalyzes the specific phosphorylation of the 3-hydroxyl group of shikimic acid using ATP as a cosubstrate. In Staphylococcus aureus (strain NCTC 8325 / PS 47), this protein is Shikimate kinase.